The primary structure comprises 383 residues: Bifunctional enzyme IspD/IspF (383 aa).

The tract at residues methionine 1–threonine 226 is 2-C-methyl-D-erythritol 4-phosphate cytidylyltransferase. A 2-C-methyl-D-erythritol 2,4-cyclodiphosphate synthase region spans residues valine 227 to threonine 383. Aspartate 233 and histidine 235 together coordinate a divalent metal cation. 4-CDP-2-C-methyl-D-erythritol 2-phosphate is bound by residues aspartate 233–histidine 235 and histidine 259–serine 260. Position 267 (histidine 267) interacts with a divalent metal cation. 4-CDP-2-C-methyl-D-erythritol 2-phosphate-binding positions include aspartate 281 to glycine 283, threonine 357 to glutamate 360, phenylalanine 364, and arginine 367.

This sequence in the N-terminal section; belongs to the IspD/TarI cytidylyltransferase family. IspD subfamily. The protein in the C-terminal section; belongs to the IspF family. Requires a divalent metal cation as cofactor.

The enzyme catalyses 2-C-methyl-D-erythritol 4-phosphate + CTP + H(+) = 4-CDP-2-C-methyl-D-erythritol + diphosphate. The catalysed reaction is 4-CDP-2-C-methyl-D-erythritol 2-phosphate = 2-C-methyl-D-erythritol 2,4-cyclic diphosphate + CMP. It functions in the pathway isoprenoid biosynthesis; isopentenyl diphosphate biosynthesis via DXP pathway; isopentenyl diphosphate from 1-deoxy-D-xylulose 5-phosphate: step 2/6. Its pathway is isoprenoid biosynthesis; isopentenyl diphosphate biosynthesis via DXP pathway; isopentenyl diphosphate from 1-deoxy-D-xylulose 5-phosphate: step 4/6. Its function is as follows. Bifunctional enzyme that catalyzes the formation of 4-diphosphocytidyl-2-C-methyl-D-erythritol from CTP and 2-C-methyl-D-erythritol 4-phosphate (MEP) (IspD), and catalyzes the conversion of 4-diphosphocytidyl-2-C-methyl-D-erythritol 2-phosphate (CDP-ME2P) to 2-C-methyl-D-erythritol 2,4-cyclodiphosphate (ME-CPP) with a corresponding release of cytidine 5-monophosphate (CMP) (IspF). This chain is Bifunctional enzyme IspD/IspF, found in Maricaulis maris (strain MCS10) (Caulobacter maris).